Here is a 327-residue protein sequence, read N- to C-terminus: Phenylalanine--tRNA ligase alpha subunit (327 aa).

Mg(2+) is bound at residue glutamate 252.

The protein belongs to the class-II aminoacyl-tRNA synthetase family. Phe-tRNA synthetase alpha subunit type 1 subfamily. As to quaternary structure, tetramer of two alpha and two beta subunits. Mg(2+) serves as cofactor.

The protein localises to the cytoplasm. The enzyme catalyses tRNA(Phe) + L-phenylalanine + ATP = L-phenylalanyl-tRNA(Phe) + AMP + diphosphate + H(+). This is Phenylalanine--tRNA ligase alpha subunit from Salmonella agona (strain SL483).